The chain runs to 90 residues: UPF0298 protein SSU98_1559 (90 aa).

It belongs to the UPF0298 family.

Its subcellular location is the cytoplasm. The chain is UPF0298 protein SSU98_1559 from Streptococcus suis (strain 98HAH33).